The sequence spans 211 residues: Protein-methionine-sulfoxide reductase heme-binding subunit MsrQ (211 aa).

The next 5 helical transmembrane spans lie at 17 to 37 (LAGL…GLGA), 54 to 74 (FLLA…PLLI), 82 to 102 (LWCF…ELGV), 116 to 136 (PYLT…FTST), and 153 to 173 (FVYL…KIIS).

It belongs to the MsrQ family. In terms of assembly, heterodimer of a catalytic subunit (MsrP) and a heme-binding subunit (MsrQ). FMN serves as cofactor. Heme b is required as a cofactor.

The protein localises to the cell inner membrane. Its function is as follows. Part of the MsrPQ system that repairs oxidized periplasmic proteins containing methionine sulfoxide residues (Met-O), using respiratory chain electrons. Thus protects these proteins from oxidative-stress damage caused by reactive species of oxygen and chlorine generated by the host defense mechanisms. MsrPQ is essential for the maintenance of envelope integrity under bleach stress, rescuing a wide series of structurally unrelated periplasmic proteins from methionine oxidation, including the primary periplasmic chaperone SurA and the lipoprotein Pal. MsrQ provides electrons for reduction to the reductase catalytic subunit MsrP, using the quinone pool of the respiratory chain. The polypeptide is Protein-methionine-sulfoxide reductase heme-binding subunit MsrQ (Escherichia coli (strain SMS-3-5 / SECEC)).